Reading from the N-terminus, the 576-residue chain is WAP, Kazal, immunoglobulin, Kunitz and NTR domain-containing protein 2 (576 aa).

A signal peptide spans 1 to 34 (MWAPRCRRFWSRWEQVAALLLLLLLLGVPPRSLA). The 54-residue stretch at 39 to 92 (RYSHAGICPNDMNPNLWVDAQSTCRRECETDQECETYEKCCPNVCGTKSCVAAR) folds into the WAP domain. Disulfide bonds link cysteine 46–cysteine 79, cysteine 62–cysteine 83, cysteine 66–cysteine 78, cysteine 72–cysteine 88, cysteine 134–cysteine 164, cysteine 138–cysteine 157, cysteine 146–cysteine 175, and cysteine 231–cysteine 287. The Kazal-like domain maps to 126–177 (WDGQPVCKCKDRCEKEPSFTCASDGLTYYNRCYMDAEACSKGITLAVVTCRY). Positions 210–303 (PALLNNPVHQ…GVLRADFPLS (94 aa)) constitute an Ig-like C2-type domain. Asparagine 319 carries N-linked (GlcNAc...) asparagine glycosylation. 9 cysteine pairs are disulfide-bonded: cysteine 328–cysteine 378, cysteine 337–cysteine 361, cysteine 353–cysteine 374, cysteine 386–cysteine 436, cysteine 395–cysteine 419, cysteine 411–cysteine 432, cysteine 445–cysteine 515, cysteine 448–cysteine 517, and cysteine 459–cysteine 566. BPTI/Kunitz inhibitor domains are found at residues 328 to 378 (CLKP…MLAC) and 386 to 436 (CSLP…EESC). The NTR domain maps to 445-566 (CRACKPRQKL…LREVMHKKTC (122 aa)). Asparagine 519 carries N-linked (GlcNAc...) asparagine glycosylation.

The protein belongs to the WFIKKN family. As to quaternary structure, interacts with both mature and propeptide myostatin/MSTN. In terms of tissue distribution, primarily expressed in ovary, testis and brain, but not in liver. In fetal tissues, it is primarily expressed in brain, skeletal muscle, thymus and kidney.

It localises to the secreted. Functionally, protease-inhibitor that contains multiple distinct protease inhibitor domains. Probably has serine protease- and metalloprotease-inhibitor activity. Inhibits the biological activity of mature myostatin, but not activin. The protein is WAP, Kazal, immunoglobulin, Kunitz and NTR domain-containing protein 2 (WFIKKN2) of Homo sapiens (Human).